The following is a 318-amino-acid chain: MKILLANPRGFCAGVSRAVETVEKVLEVEKSPVYVRHEVVHNKVVVDSLKKKGVVFVKEVDEVPDDAVCIFSAHGVSLKVEEAAAKKNLVLYDATCPLVTKVHRGVRLASNNDAECILIGHKGHPEVQGTMGQYRSKKGAIYLIESEEDLNKLTIKDPDNLYYATQTTLSVDETQGIIQALKDKYPNIKGPKKEDICYATQNRQTAIKAMLKHIDVLVVVGSQNSSNSNRLKELATLEGIDAYLVDNPKDVDKLWFDNKKVCGVSAGASAPEYLVQQIISQISKVCSTEVEEFEGIKEEVYFPLPRLLKQKIGTGKVE.

Cys12 serves as a coordination point for [4Fe-4S] cluster. (2E)-4-hydroxy-3-methylbut-2-enyl diphosphate-binding residues include His41 and His74. His41 and His74 together coordinate dimethylallyl diphosphate. His41 and His74 together coordinate isopentenyl diphosphate. [4Fe-4S] cluster is bound at residue Cys96. His124 provides a ligand contact to (2E)-4-hydroxy-3-methylbut-2-enyl diphosphate. His124 serves as a coordination point for dimethylallyl diphosphate. Residue His124 coordinates isopentenyl diphosphate. The active-site Proton donor is Glu126. Residue Thr167 coordinates (2E)-4-hydroxy-3-methylbut-2-enyl diphosphate. Position 197 (Cys197) interacts with [4Fe-4S] cluster. The (2E)-4-hydroxy-3-methylbut-2-enyl diphosphate site is built by Ser225, Ser226, Asn227, and Ser269. Residues Ser225, Ser226, Asn227, and Ser269 each coordinate dimethylallyl diphosphate. The isopentenyl diphosphate site is built by Ser225, Ser226, Asn227, and Ser269.

This sequence belongs to the IspH family. [4Fe-4S] cluster is required as a cofactor.

The enzyme catalyses isopentenyl diphosphate + 2 oxidized [2Fe-2S]-[ferredoxin] + H2O = (2E)-4-hydroxy-3-methylbut-2-enyl diphosphate + 2 reduced [2Fe-2S]-[ferredoxin] + 2 H(+). The catalysed reaction is dimethylallyl diphosphate + 2 oxidized [2Fe-2S]-[ferredoxin] + H2O = (2E)-4-hydroxy-3-methylbut-2-enyl diphosphate + 2 reduced [2Fe-2S]-[ferredoxin] + 2 H(+). It functions in the pathway isoprenoid biosynthesis; dimethylallyl diphosphate biosynthesis; dimethylallyl diphosphate from (2E)-4-hydroxy-3-methylbutenyl diphosphate: step 1/1. The protein operates within isoprenoid biosynthesis; isopentenyl diphosphate biosynthesis via DXP pathway; isopentenyl diphosphate from 1-deoxy-D-xylulose 5-phosphate: step 6/6. Catalyzes the conversion of 1-hydroxy-2-methyl-2-(E)-butenyl 4-diphosphate (HMBPP) into a mixture of isopentenyl diphosphate (IPP) and dimethylallyl diphosphate (DMAPP). Acts in the terminal step of the DOXP/MEP pathway for isoprenoid precursor biosynthesis. This is 4-hydroxy-3-methylbut-2-enyl diphosphate reductase from Francisella tularensis subsp. mediasiatica (strain FSC147).